The chain runs to 172 residues: uncharacterized protein (172 aa).

4 consecutive transmembrane segments (helical) span residues 20–40 (LVLITISIIALSTAYIAEYIF), 48–68 (CVYERFPYLMLIKISLTALII), 76–96 (LILILITILSSCILSTYHSFV), and 146–166 (MTEYNLLLNICLLIFLGLILF).

It is found in the cell membrane. This is an uncharacterized protein from Rickettsia prowazekii (strain Madrid E).